The following is a 468-amino-acid chain: 6-phosphogluconate dehydrogenase, decarboxylating (468 aa).

Residues 10–15 (GMAVMG), 33–35 (NRT), 74–76 (VQS), and asparagine 102 contribute to the NADP(+) site. Substrate-binding positions include asparagine 102 and 128–130 (SGG). Catalysis depends on lysine 182, which acts as the Proton acceptor. 185 to 186 (HN) contributes to the substrate binding site. The active-site Proton donor is the glutamate 189. Substrate contacts are provided by tyrosine 190, lysine 259, arginine 286, arginine 445, and histidine 451.

It belongs to the 6-phosphogluconate dehydrogenase family. As to quaternary structure, homodimer.

It carries out the reaction 6-phospho-D-gluconate + NADP(+) = D-ribulose 5-phosphate + CO2 + NADPH. It functions in the pathway carbohydrate degradation; pentose phosphate pathway; D-ribulose 5-phosphate from D-glucose 6-phosphate (oxidative stage): step 3/3. Its function is as follows. Catalyzes the oxidative decarboxylation of 6-phosphogluconate to ribulose 5-phosphate and CO(2), with concomitant reduction of NADP to NADPH. The sequence is that of 6-phosphogluconate dehydrogenase, decarboxylating (gnd) from Buchnera aphidicola subsp. Acyrthosiphon pisum (strain APS) (Acyrthosiphon pisum symbiotic bacterium).